Consider the following 1112-residue polypeptide: Electrogenic sodium bicarbonate cotransporter 4 (1112 aa).

Residues 1-13 (MKVEEKAGVKKLE) are compositionally biased toward basic and acidic residues. 3 disordered regions span residues 1-80 (MKVE…SSLG), 220-255 (KKPI…HHST), and 439-469 (GRSG…NEAE). Residues 1-513 (MKVEEKAGVK…DFYDGFHIQS (513 aa)) lie on the Cytoplasmic side of the membrane. Polar residues-rich tracts occupy residues 53–67 (QRVQ…SQQD) and 233–244 (SVSTTNRSSARS). Positions 444 to 465 (SAGGGGSGGGAGGSGAGGGGSG) are enriched in gly residues. The helical transmembrane segment at 514 to 536 (ISAVLFIYLGCITNAITFGGLLG) threads the bilayer. Topologically, residues 537–547 (DATDNYQGVME) are extracellular. Residues 548–579 (SFLGTAMAGSLFCLFSGQPLIILSSTGPILIF) form a helical membrane-spanning segment. Residues 580–598 (EKLLFDFSKANGLDYMEFR) are Cytoplasmic-facing. A helical membrane pass occupies residues 599–620 (LWIGLHSAIQCLILVATDASFI). Residues 621 to 734 (IKYITRFTEE…LGSSCQFVPD (114 aa)) lie on the Extracellular side of the membrane. The helical transmembrane segment at 735–753 (LALMSFILFFGTYSMTLTL) threads the bilayer. Over 754 to 772 (KKFKFSRYFPTKVRTLVAD) the chain is Cytoplasmic. The chain crosses the membrane as a helical span at residues 773–792 (FSIVFSILLFCGIDACFGLQ). Residues 793–820 (TPKLHVPNVIKPTRPDRGWFVAPFGKNP) lie on the Extracellular side of the membrane. Residues 821–839 (WWVYPASILPALLVTILIF) traverse the membrane as a helical segment. The Cytoplasmic segment spans residues 840 to 858 (MDQQITAVIVNRKENKLRK). The helical transmembrane segment at 859–875 (AAGYHLDLFWVGILMAL) threads the bilayer. Residues 876-880 (CSFMG) lie on the Extracellular side of the membrane. A helical transmembrane segment spans residues 881-900 (LPWYVAATVISIAHIDSLKM). The Cytoplasmic segment spans residues 901-920 (ETETSAPGEQPQFLGVREQR). A helical transmembrane segment spans residues 921-940 (VTGVMVFILTGISVFLAPIL). Over 941-945 (KYIPM) the chain is Extracellular. Residues 946 to 966 (PVLYGVFLYMGVASLNGIQFW) form a helical membrane-spanning segment. Residues 967 to 992 (DRCKLFLMPAKHQPDHAFLRHVPLRR) lie on the Cytoplasmic side of the membrane. A helical membrane pass occupies residues 993–1010 (IHLFTLVQILCLALLWIL). At 1011–1015 (KSTMA) the chain is on the extracellular side. Residues 1016 to 1033 (AIIFPVMILGLIIVRRLL) form a helical membrane-spanning segment. Over 1034–1112 (DLIFSQHDLA…KRSSSWSHSL (79 aa)) the chain is Cytoplasmic. Positions 1055-1074 (KESDRKKRRKEVHENTDKEP) are enriched in basic and acidic residues. Residues 1055–1112 (KESDRKKRRKEVHENTDKEPQFLPPSVVKIPMEGIPSDPQNGIHCVGRKRSSSWSHSL) are disordered.

The protein belongs to the anion exchanger (TC 2.A.31) family. As to expression, observed in hepatocytes and in the apical region of bile duct intrahepatic cholangiocytes of liver. Also observed in uroepithelium cells lining the outer pelvic wall of the kidney (at protein level). Highly expressed in colon, distal colon, liver, kidney and testis. Moderate expression in duodenum and stomach and weak expression in heart. In kidney, very weakly expressed in the inner medulla, but abundantly expressed in cortex and outer medulla in the medullary thick ascending and cortical thick ascending limbs of the loop of Henle.

It is found in the basolateral cell membrane. The protein resides in the apical cell membrane. The catalysed reaction is 2 hydrogencarbonate(out) + Na(+)(out) = 2 hydrogencarbonate(in) + Na(+)(in). It carries out the reaction 3 hydrogencarbonate(out) + Na(+)(out) = 3 hydrogencarbonate(in) + Na(+)(in). Functionally, mediates sodium- and bicarbonate-dependent electrogenic sodium bicarbonate cotransport, with a Na(+):HCO3(-) stoichiometry varying from 1:2 to 1:3. The sequence is that of Electrogenic sodium bicarbonate cotransporter 4 from Rattus norvegicus (Rat).